Here is a 120-residue protein sequence, read N- to C-terminus: UPF0342 protein Csac_0863 (120 aa).

The protein belongs to the UPF0342 family.

The chain is UPF0342 protein Csac_0863 from Caldicellulosiruptor saccharolyticus (strain ATCC 43494 / DSM 8903 / Tp8T 6331).